The primary structure comprises 279 residues: Undecaprenyl-diphosphatase (279 aa).

7 consecutive transmembrane segments (helical) span residues 10 to 30 (FICFKSFFLGIIQGFTEFLPI), 48 to 68 (LGVSFSASIQLGSAVAIIYYF), 96 to 116 (LFIYIFVASIPILVFGLLIKL), 128 to 148 (GLFSIAITSIVMSLLLALSEI), 203 to 223 (SFLVGIPAVSISGLVELFSLF), 229 to 249 (IDIIPIIIGIISSFFSSIFAI), and 259 to 279 (NNTLVFVYYRLAFGIFILTTL).

This sequence belongs to the UppP family.

It localises to the cell inner membrane. It catalyses the reaction di-trans,octa-cis-undecaprenyl diphosphate + H2O = di-trans,octa-cis-undecaprenyl phosphate + phosphate + H(+). Its function is as follows. Catalyzes the dephosphorylation of undecaprenyl diphosphate (UPP). Confers resistance to bacitracin. This Prochlorococcus marinus (strain NATL1A) protein is Undecaprenyl-diphosphatase.